The chain runs to 68 residues: Large ribosomal subunit protein bL31 (68 aa).

Positions 16, 18, 36, and 39 each coordinate Zn(2+).

This sequence belongs to the bacterial ribosomal protein bL31 family. Type A subfamily. As to quaternary structure, part of the 50S ribosomal subunit. Zn(2+) is required as a cofactor.

Its function is as follows. Binds the 23S rRNA. The chain is Large ribosomal subunit protein bL31 from Sorangium cellulosum (strain So ce56) (Polyangium cellulosum (strain So ce56)).